A 210-amino-acid polypeptide reads, in one-letter code: Regulator of G-protein signaling 17 (210 aa).

The tract at residues 1–21 (MRKRQQSQNEGTQAVSQAPGN) is disordered. The region spanning 84–200 (NFDKMMKTPA…LNSQIYKAFV (117 aa)) is the RGS domain. Tyr137 carries the post-translational modification Phosphotyrosine.

In terms of assembly, interacts with GNAI1 and GNAQ. Interacts with GNAZ and GNAI2. Interacts with OPRM1. Forms a complex with mu-opioid receptors and G(alpha)z/i2 subunits, including GNAZ and GNAI2; the formation of this complex results in mu-opioid receptor desensitization. Interacts with HINT1. In terms of processing, N- and O-glycosylated in synapsomal membranes. Post-translationally, serine phosphorylated in synapsomal membranes. Sumoylated with SUMO1 and SUM02 in synaptosomes. The sumoylated forms act as a scaffold for sequestering mu-opioid receptor-activated G(alpha) subunits. Desumoylated by HINT1. In terms of tissue distribution, detected in brain (at protein level). Highly expressed in the hypothalamus, periaqueductal gray matter, and pons-medulla. Lower levels in the thalamus, cortex and spinal cord. Weak expression in the striatum and cerebellum.

The protein resides in the membrane. The protein localises to the synapse. It is found in the synaptosome. It localises to the nucleus. Its subcellular location is the cytoplasm. In terms of biological role, regulates G protein-coupled receptor signaling cascades, including signaling via muscarinic acetylcholine receptor CHRM2 and dopamine receptor DRD2. Inhibits signal transduction by increasing the GTPase activity of G protein alpha subunits, thereby driving them into their inactive GDP-bound form. Binds selectively to GNAZ and GNAI2 subunits, accelerates their GTPase activity and regulates their signaling activities. Negatively regulates mu-opioid receptor-mediated activation of the G-proteins. The chain is Regulator of G-protein signaling 17 (Rgs17) from Mus musculus (Mouse).